The primary structure comprises 236 residues: Phosphoserine phosphatase (236 aa).

D30 acts as the Nucleophile in catalysis. 2 residues coordinate Mg(2+): D30 and D32. Residue D32 is the Proton donor of the active site. Residues E39, R76, 120–121 (SG), and K169 contribute to the substrate site. Mg(2+) is bound at residue D192. Position 195 (N195) interacts with substrate.

Belongs to the HAD-like hydrolase superfamily. SerB family. Requires Mg(2+) as cofactor.

The catalysed reaction is O-phospho-L-serine + H2O = L-serine + phosphate. It catalyses the reaction O-phospho-D-serine + H2O = D-serine + phosphate. It functions in the pathway amino-acid biosynthesis; L-serine biosynthesis; L-serine from 3-phospho-D-glycerate: step 3/3. This Polaromonas sp. (strain JS666 / ATCC BAA-500) protein is Phosphoserine phosphatase.